A 313-amino-acid chain; its full sequence is Ornithine carbamoyltransferase (313 aa).

Carbamoyl phosphate-binding positions include Ser-57–Thr-60, Gln-84, Arg-108, and His-135–Gln-138. Residues Asn-167, Asp-231, and Ser-235–Met-236 contribute to the L-ornithine site. Carbamoyl phosphate contacts are provided by residues Cys-272–Leu-273 and Arg-300.

This sequence belongs to the aspartate/ornithine carbamoyltransferase superfamily. OTCase family.

It localises to the cytoplasm. It catalyses the reaction carbamoyl phosphate + L-ornithine = L-citrulline + phosphate + H(+). The protein operates within amino-acid biosynthesis; L-arginine biosynthesis; L-arginine from L-ornithine and carbamoyl phosphate: step 1/3. Functionally, reversibly catalyzes the transfer of the carbamoyl group from carbamoyl phosphate (CP) to the N(epsilon) atom of ornithine (ORN) to produce L-citrulline. The polypeptide is Ornithine carbamoyltransferase (Pseudothermotoga lettingae (strain ATCC BAA-301 / DSM 14385 / NBRC 107922 / TMO) (Thermotoga lettingae)).